The sequence spans 150 residues: MQVILLDKVANLGSLGDQVNVKAGYARNFLVPQGKAVPATKKNVEFFETRRAELEAKVADVLAAAHARAEKINALGTVTLASKSGDEGKLFGSIGTRDIADAVTAAGVEVAKSEVRLPNGVLRTTGEHEVDFQVHSEVFAKLTVNIVAEA.

Belongs to the bacterial ribosomal protein bL9 family.

Binds to the 23S rRNA. The protein is Large ribosomal subunit protein bL9 of Erwinia tasmaniensis (strain DSM 17950 / CFBP 7177 / CIP 109463 / NCPPB 4357 / Et1/99).